Here is a 232-residue protein sequence, read N- to C-terminus: 26.5 kDa heat shock protein, mitochondrial (232 aa).

Residues 1-42 constitute a mitochondrion transit peptide; it reads MALARLALRNLQQKLSPSLMGQSCERGLVGNRHNPMKLNRFM. A disordered region spans residues 44-82; the sequence is TSAGEQEDKMNTEVSVSEKKSPRQNFPRRRGRKSLWRNT. Residues 49–64 show a composition bias toward basic and acidic residues; the sequence is QEDKMNTEVSVSEKKS. Residues 69–78 are compositionally biased toward basic residues; it reads FPRRRGRKSL. Positions 114 to 232 constitute a sHSP domain; sequence IFDNFNVNPF…KKNVQEISVE (119 aa).

This sequence belongs to the small heat shock protein (HSP20) family. As to quaternary structure, may form oligomeric structures.

Its subcellular location is the mitochondrion. This Arabidopsis thaliana (Mouse-ear cress) protein is 26.5 kDa heat shock protein, mitochondrial (HSP26.5).